The chain runs to 528 residues: T-complex protein 1 subunit gamma (528 aa).

Serine 250 carries the phosphoserine modification. A disulfide bond links cysteine 364 and cysteine 370.

It belongs to the TCP-1 chaperonin family. As to quaternary structure, heterooligomeric complex of about 850 to 900 kDa that forms two stacked rings, 12 to 16 nm in diameter.

It is found in the cytoplasm. In terms of biological role, molecular chaperone; assists the folding of proteins upon ATP hydrolysis. Known to play a role, in vitro, in the folding of actin and tubulin. This chain is T-complex protein 1 subunit gamma (cct3), found in Schizosaccharomyces pombe (strain 972 / ATCC 24843) (Fission yeast).